Reading from the N-terminus, the 227-residue chain is MADS-box transcription factor 25 (227 aa).

One can recognise an MADS-box domain in the interval 1 to 61 (MGRGKIAIKR…GRLYDFSSSS (61 aa)). The 91-residue stretch at 86 to 176 (AKFWQREVTT…RKKFNIAHQR (91 aa)) folds into the K-box domain. The segment at 183 to 227 (KLNSGESTSSEQVTRSSKDPGESSTPRDSRVCIDLELSQKEVEDE) is disordered. A compositionally biased stretch (polar residues) spans 186–197 (SGESTSSEQVTR). A compositionally biased stretch (basic and acidic residues) spans 198-227 (SSKDPGESSTPRDSRVCIDLELSQKEVEDE).

In terms of tissue distribution, expressed in seedling roots.

It localises to the nucleus. Its function is as follows. Probable transcription factor. The sequence is that of MADS-box transcription factor 25 (MADS25) from Oryza sativa subsp. japonica (Rice).